Reading from the N-terminus, the 185-residue chain is Ribosome hibernation promotion factor (185 aa).

Residues 1–125 (MIKFNIRGEN…PLDTTDEVAE (125 aa)) are probably still associates with ribosome. Residues 126–185 (DHVDIVRTKHVALKPMDAEEAVLQMDMLGHDFYVFTDADSNGTHVVYRRTDGRYGLIETE) are required but not sufficient to restore ribosome dimerization, in vitro will replace E.coli RMF in ribosome dimerization.

Belongs to the HPF/YfiA ribosome-associated protein family. Long HPF subfamily. Interacts with 100S ribosomes in stationary phase; alters the relative position of the 30S and 50S subunits.

It is found in the cytoplasm. Functionally, required for dimerization of active 70S ribosomes into 100S ribosomes in stationary phase; 100S ribosomes are translationally inactive and sometimes present during exponential growth. Able to dimerize E.coli 70S ribosomes in vitro. This Lactococcus lactis subsp. cremoris (strain MG1363) protein is Ribosome hibernation promotion factor.